Consider the following 351-residue polypeptide: Methylthioribose-1-phosphate isomerase (351 aa).

Substrate-binding positions include 51–53 (RGA), Arg-94, and Gln-199. The active-site Proton donor is the Asp-240. 250–251 (NK) is a substrate binding site.

Belongs to the eIF-2B alpha/beta/delta subunits family. MtnA subfamily. In terms of assembly, homodimer.

The enzyme catalyses 5-(methylsulfanyl)-alpha-D-ribose 1-phosphate = 5-(methylsulfanyl)-D-ribulose 1-phosphate. It participates in amino-acid biosynthesis; L-methionine biosynthesis via salvage pathway; L-methionine from S-methyl-5-thio-alpha-D-ribose 1-phosphate: step 1/6. Catalyzes the interconversion of methylthioribose-1-phosphate (MTR-1-P) into methylthioribulose-1-phosphate (MTRu-1-P). This is Methylthioribose-1-phosphate isomerase from Bacillus cereus (strain ATCC 10987 / NRS 248).